Reading from the N-terminus, the 209-residue chain is 2-phospho-L-lactate guanylyltransferase (209 aa).

This sequence belongs to the CofC family. As to quaternary structure, homodimer.

The catalysed reaction is (2S)-2-phospholactate + GTP + H(+) = (2S)-lactyl-2-diphospho-5'-guanosine + diphosphate. It participates in cofactor biosynthesis; coenzyme F420 biosynthesis. Functionally, guanylyltransferase that catalyzes the activation of (2S)-2-phospholactate (2-PL) as (2S)-lactyl-2-diphospho-5'-guanosine, via the condensation of 2-PL with GTP. It is involved in the biosynthesis of coenzyme F420, a hydride carrier cofactor. The chain is 2-phospho-L-lactate guanylyltransferase from Halobacterium salinarum (strain ATCC 29341 / DSM 671 / R1).